We begin with the raw amino-acid sequence, 120 residues long: NAD(P)H-quinone oxidoreductase subunit 3, chloroplastic (120 aa).

Helical transmembrane passes span 7–27, 64–84, and 88–108; these read YDTFWIYLSISSLIPILAFSI, MFALVFVVFDVETVFLYPWAM, and ILGLFTFIEAFIFVIILIVGL.

The protein belongs to the complex I subunit 3 family. As to quaternary structure, NDH is composed of at least 16 different subunits, 5 of which are encoded in the nucleus.

Its subcellular location is the plastid. The protein resides in the chloroplast thylakoid membrane. It carries out the reaction a plastoquinone + NADH + (n+1) H(+)(in) = a plastoquinol + NAD(+) + n H(+)(out). It catalyses the reaction a plastoquinone + NADPH + (n+1) H(+)(in) = a plastoquinol + NADP(+) + n H(+)(out). In terms of biological role, NDH shuttles electrons from NAD(P)H:plastoquinone, via FMN and iron-sulfur (Fe-S) centers, to quinones in the photosynthetic chain and possibly in a chloroplast respiratory chain. The immediate electron acceptor for the enzyme in this species is believed to be plastoquinone. Couples the redox reaction to proton translocation, and thus conserves the redox energy in a proton gradient. This chain is NAD(P)H-quinone oxidoreductase subunit 3, chloroplastic, found in Cryptomeria japonica (Japanese cedar).